A 370-amino-acid polypeptide reads, in one-letter code: UDP-3-O-acylglucosamine N-acyltransferase (370 aa).

Catalysis depends on His-252, which acts as the Proton acceptor. The disordered stretch occupies residues 350-370; sequence AAGRQDGPAANAASSSAGDKA. A compositionally biased stretch (low complexity) spans 358 to 370; it reads AANAASSSAGDKA.

This sequence belongs to the transferase hexapeptide repeat family. LpxD subfamily. In terms of assembly, homotrimer.

It carries out the reaction a UDP-3-O-[(3R)-3-hydroxyacyl]-alpha-D-glucosamine + a (3R)-hydroxyacyl-[ACP] = a UDP-2-N,3-O-bis[(3R)-3-hydroxyacyl]-alpha-D-glucosamine + holo-[ACP] + H(+). It participates in bacterial outer membrane biogenesis; LPS lipid A biosynthesis. Its function is as follows. Catalyzes the N-acylation of UDP-3-O-acylglucosamine using 3-hydroxyacyl-ACP as the acyl donor. Is involved in the biosynthesis of lipid A, a phosphorylated glycolipid that anchors the lipopolysaccharide to the outer membrane of the cell. This Paraburkholderia xenovorans (strain LB400) protein is UDP-3-O-acylglucosamine N-acyltransferase.